The following is a 119-amino-acid chain: Large ribosomal subunit protein uL14 (119 aa).

The protein belongs to the universal ribosomal protein uL14 family. Part of the 50S ribosomal subunit. Forms a cluster with proteins L3 and L19. In the 70S ribosome, L14 and L19 interact and together make contacts with the 16S rRNA in bridges B5 and B8.

Its function is as follows. Binds to 23S rRNA. Forms part of two intersubunit bridges in the 70S ribosome. The protein is Large ribosomal subunit protein uL14 of Wolbachia pipientis subsp. Culex pipiens (strain wPip).